The sequence spans 199 residues: Large ribosomal subunit protein bL25 (199 aa).

Belongs to the bacterial ribosomal protein bL25 family. CTC subfamily. In terms of assembly, part of the 50S ribosomal subunit; part of the 5S rRNA/L5/L18/L25 subcomplex. Contacts the 5S rRNA. Binds to the 5S rRNA independently of L5 and L18.

Functionally, this is one of the proteins that binds to the 5S RNA in the ribosome where it forms part of the central protuberance. The chain is Large ribosomal subunit protein bL25 from Pelodictyon phaeoclathratiforme (strain DSM 5477 / BU-1).